The following is a 400-amino-acid chain: LIM homeobox transcription factor 1-beta.1 (400 aa).

LIM zinc-binding domains are found at residues 54–113 (AVCE…LFAA) and 114–175 (KCSG…EKDL). Positions 175 to 228 (LLSSGSPDDSDSVKSDDEEGDVKPGKGRVNQGKGSDDGKDPRRPKRPRTILTTQ) are disordered. Residues 218–277 (PKRPRTILTTQQRRAFKASFEVSSKPCRKVRETLAAETGLSVRVVQVWFQNQRAKIKKLA) constitute a DNA-binding region (homeobox).

Shows a temporal expression pattern in three main areas: neural, kidney and limbs. From stage 13 onwards, expressed in regions of the nervous system including the placodes and otic vesicles, eye, specific sets of neurons, and in discreet regions of the neural tube. From stage 13, also expressed in the presumptive pronephros, and from stage 27 expression is predominant in the capsule of the pronephric glomus. Also expressed in the developing forelimbs and hindlimbs. In metamorphosing tadpoles, expressed in the eye, brain, muscle and mesonephric kidney.

It localises to the nucleus. Functionally, required for early specification of the kidney glomus, lying upstream of wt1 in the pathway controlling glomus differentiation. The balance in levels and expression patterns of binding partners such as lhx1/lim-1 influences differentiation into glomus or tubule derivatives. Involved in specification of serotonergic neurons. The protein is LIM homeobox transcription factor 1-beta.1 of Xenopus laevis (African clawed frog).